A 284-amino-acid chain; its full sequence is 4-diphosphocytidyl-2-C-methyl-D-erythritol kinase (284 aa).

The active site involves K14. ATP is bound at residue 98–108 (PMGGGIGGGSS). The active site involves D140.

Belongs to the GHMP kinase family. IspE subfamily.

It carries out the reaction 4-CDP-2-C-methyl-D-erythritol + ATP = 4-CDP-2-C-methyl-D-erythritol 2-phosphate + ADP + H(+). It participates in isoprenoid biosynthesis; isopentenyl diphosphate biosynthesis via DXP pathway; isopentenyl diphosphate from 1-deoxy-D-xylulose 5-phosphate: step 3/6. Catalyzes the phosphorylation of the position 2 hydroxy group of 4-diphosphocytidyl-2C-methyl-D-erythritol. The chain is 4-diphosphocytidyl-2-C-methyl-D-erythritol kinase from Shewanella loihica (strain ATCC BAA-1088 / PV-4).